The primary structure comprises 468 residues: GTPase Der (468 aa).

EngA-type G domains follow at residues 3–167 (PTLV…PYAE) and 179–352 (PVIA…TAAM). Residues 9 to 16 (GRPNVGKS), 56 to 60 (DTGGF), 119 to 122 (NKAE), 185 to 192 (GRPNVGKS), 232 to 236 (DTAGL), and 297 to 300 (NKWD) contribute to the GTP site. One can recognise a KH-like domain in the interval 353–437 (AHIPTPKLTR…PLRVEFRTGH (85 aa)). The disordered stretch occupies residues 434 to 468 (RTGHNPYAGKKAPPLTEEEARRAHSRRRRNRKKYG). Over residues 456 to 468 (AHSRRRRNRKKYG) the composition is skewed to basic residues.

Belongs to the TRAFAC class TrmE-Era-EngA-EngB-Septin-like GTPase superfamily. EngA (Der) GTPase family. Associates with the 50S ribosomal subunit.

GTPase that plays an essential role in the late steps of ribosome biogenesis. This chain is GTPase Der, found in Nitrosomonas eutropha (strain DSM 101675 / C91 / Nm57).